Here is a 317-residue protein sequence, read N- to C-terminus: Pectinesterase 31 (317 aa).

Residues T91 and Q121 each contribute to the substrate site. The active-site Proton donor is D144. D165 (nucleophile) is an active-site residue. Substrate contacts are provided by R222 and W224.

Belongs to the pectinesterase family. In terms of tissue distribution, expressed in siliques.

It catalyses the reaction [(1-&gt;4)-alpha-D-galacturonosyl methyl ester](n) + n H2O = [(1-&gt;4)-alpha-D-galacturonosyl](n) + n methanol + n H(+). It participates in glycan metabolism; pectin degradation; 2-dehydro-3-deoxy-D-gluconate from pectin: step 1/5. Does not require salt for activity. Not inhibited by kiwi pectin methylesterase inhibitor (PMEI). Acts in the modification of cell walls via demethylesterification of cell wall pectin. Acts in a blockwise manner, resulting in a cell wall rigidification. In Arabidopsis thaliana (Mouse-ear cress), this protein is Pectinesterase 31 (PME31).